We begin with the raw amino-acid sequence, 146 residues long: NADH-quinone oxidoreductase subunit A (146 aa).

3 helical membrane passes run 8–28 (FGSVFVFLLLGVIFVVGGYLT), 63–83 (FYVVALIFIIFDVEVVFLYPW), and 93–113 (FALIEVLVFAGILILGLAYAW).

It belongs to the complex I subunit 3 family. In terms of assembly, NDH-1 is composed of 14 different subunits. Subunits NuoA, H, J, K, L, M, N constitute the membrane sector of the complex.

The protein resides in the cell inner membrane. It catalyses the reaction a quinone + NADH + 5 H(+)(in) = a quinol + NAD(+) + 4 H(+)(out). Functionally, NDH-1 shuttles electrons from NADH, via FMN and iron-sulfur (Fe-S) centers, to quinones in the respiratory chain. The immediate electron acceptor for the enzyme in this species is believed to be a menaquinone. Couples the redox reaction to proton translocation (for every two electrons transferred, four hydrogen ions are translocated across the cytoplasmic membrane), and thus conserves the redox energy in a proton gradient. The sequence is that of NADH-quinone oxidoreductase subunit A from Chlorobium chlorochromatii (strain CaD3).